The primary structure comprises 1340 residues: Iron-sulfur cluster assembly protein SufD (1340 aa).

Positions 477–487 are enriched in low complexity; sequence NSLKHNNNNTK. Disordered regions lie at residues 477–498, 723–743, 765–794, 835–865, and 992–1055; these read NSLK…ERSS, HGKD…NYLN, NVST…QSTV, EKNE…GEKK, and NIPT…NNIQ. Over residues 723 to 734 the composition is skewed to basic and acidic residues; it reads HGKDNTQHDDKN. Residues 782 to 794 show a composition bias toward polar residues; the sequence is NPDTETNNEQSTV. Over residues 1022-1037 the composition is skewed to polar residues; it reads DNLLQNDQATNSNVEI.

This sequence belongs to the iron-sulfur cluster assembly SufBD family. In terms of assembly, component of a complex composed of SufB, SufC and SufD in a stoichiometric ratio of 1:2:1. Interacts with SufB. Interacts with SufC; the interaction enhances the ATPase activity of SufC.

The protein resides in the plastid. Its subcellular location is the apicoplast. The protein operates within cofactor biosynthesis; iron-sulfur cluster biosynthesis. Its function is as follows. Participates in the sulfur mobilization (SUF) pathway for iron-sulfur (Fe-S) cluster biogenesis. As part of a complex consisting of SufB-SufC(2)-SufD, involved in assembly of [4Fe-4S] clusters. Enhances the ATPase activity of SufC. The chain is Iron-sulfur cluster assembly protein SufD from Plasmodium berghei (strain Anka).